The sequence spans 355 residues: Peptide chain release factor 1 (355 aa).

N5-methylglutamine is present on Gln230.

It belongs to the prokaryotic/mitochondrial release factor family. Methylated by PrmC. Methylation increases the termination efficiency of RF1.

The protein localises to the cytoplasm. Its function is as follows. Peptide chain release factor 1 directs the termination of translation in response to the peptide chain termination codons UAG and UAA. This is Peptide chain release factor 1 from Geobacter metallireducens (strain ATCC 53774 / DSM 7210 / GS-15).